The following is a 241-amino-acid chain: 2-C-methyl-D-erythritol 4-phosphate cytidylyltransferase (241 aa).

Belongs to the IspD/TarI cytidylyltransferase family. IspD subfamily.

The catalysed reaction is 2-C-methyl-D-erythritol 4-phosphate + CTP + H(+) = 4-CDP-2-C-methyl-D-erythritol + diphosphate. Its pathway is isoprenoid biosynthesis; isopentenyl diphosphate biosynthesis via DXP pathway; isopentenyl diphosphate from 1-deoxy-D-xylulose 5-phosphate: step 2/6. Its function is as follows. Catalyzes the formation of 4-diphosphocytidyl-2-C-methyl-D-erythritol from CTP and 2-C-methyl-D-erythritol 4-phosphate (MEP). This is 2-C-methyl-D-erythritol 4-phosphate cytidylyltransferase from Pseudoalteromonas translucida (strain TAC 125).